Here is a 1136-residue protein sequence, read N- to C-terminus: Unconventional myosin-Ib (1136 aa).

The Myosin motor domain maps to isoleucine 15 to lysine 701. Serine 60 is subject to Phosphoserine. Glycine 108 to threonine 115 lines the ATP pocket. Lysine 287 is covalently cross-linked (Glycyl lysine isopeptide (Lys-Gly) (interchain with G-Cter in SUMO1); alternate). Residue lysine 287 forms a Glycyl lysine isopeptide (Lys-Gly) (interchain with G-Cter in SUMO2); alternate linkage. The segment at valine 578–aspartate 600 is actin-binding. IQ domains follow at residues leucine 704 to valine 733, lysine 728 to glutamine 748, threonine 750 to cysteine 779, cysteine 779 to asparagine 808, asparagine 808 to arginine 837, and arginine 837 to glycine 866. The 185-residue stretch at lysine 952 to proline 1136 folds into the TH1 domain.

The protein belongs to the TRAFAC class myosin-kinesin ATPase superfamily. Myosin family.

Functionally, motor protein that may participate in process critical to neuronal development and function such as cell migration, neurite outgrowth and vesicular transport. This is Unconventional myosin-Ib (MYO1B) from Homo sapiens (Human).